The sequence spans 406 residues: 4-hydroxy-3-methylbut-2-en-1-yl diphosphate synthase (flavodoxin) (406 aa).

The [4Fe-4S] cluster site is built by Cys-297, Cys-300, Cys-343, and Glu-350.

This sequence belongs to the IspG family. As to quaternary structure, homodimer. Requires [4Fe-4S] cluster as cofactor.

The enzyme catalyses (2E)-4-hydroxy-3-methylbut-2-enyl diphosphate + oxidized [flavodoxin] + H2O + 2 H(+) = 2-C-methyl-D-erythritol 2,4-cyclic diphosphate + reduced [flavodoxin]. Its pathway is isoprenoid biosynthesis; isopentenyl diphosphate biosynthesis via DXP pathway; isopentenyl diphosphate from 1-deoxy-D-xylulose 5-phosphate: step 5/6. Functionally, converts 2C-methyl-D-erythritol 2,4-cyclodiphosphate (ME-2,4cPP) into 1-hydroxy-2-methyl-2-(E)-butenyl 4-diphosphate. This Thermus thermophilus (strain ATCC BAA-163 / DSM 7039 / HB27) protein is 4-hydroxy-3-methylbut-2-en-1-yl diphosphate synthase (flavodoxin).